The chain runs to 524 residues: Peptide chain release factor 3 (524 aa).

Residues 11–278 (AKRRTFAIIS…SFVQYAPEPG (268 aa)) enclose the tr-type G domain. GTP is bound by residues 20-27 (SHPDAGKT), 88-92 (DTPGH), and 142-145 (NKLD).

Belongs to the TRAFAC class translation factor GTPase superfamily. Classic translation factor GTPase family. PrfC subfamily.

Its subcellular location is the cytoplasm. Functionally, increases the formation of ribosomal termination complexes and stimulates activities of RF-1 and RF-2. It binds guanine nucleotides and has strong preference for UGA stop codons. It may interact directly with the ribosome. The stimulation of RF-1 and RF-2 is significantly reduced by GTP and GDP, but not by GMP. This Lacticaseibacillus paracasei (strain ATCC 334 / BCRC 17002 / CCUG 31169 / CIP 107868 / KCTC 3260 / NRRL B-441) (Lactobacillus paracasei) protein is Peptide chain release factor 3.